The primary structure comprises 274 residues: Nitrogenase iron protein (274 aa).

8-15 lines the ATP pocket; sequence GKGGIGKS. [4Fe-4S] cluster is bound at residue Cys-94. Arg-97 carries the ADP-ribosylarginine; by dinitrogenase reductase ADP-ribosyltransferase modification. Residue Cys-131 participates in [4Fe-4S] cluster binding.

Belongs to the NifH/BchL/ChlL family. Homodimer. [4Fe-4S] cluster serves as cofactor. Post-translationally, the reversible ADP-ribosylation of Arg-97 inactivates the nitrogenase reductase and regulates nitrogenase activity.

It carries out the reaction N2 + 8 reduced [2Fe-2S]-[ferredoxin] + 16 ATP + 16 H2O = H2 + 8 oxidized [2Fe-2S]-[ferredoxin] + 2 NH4(+) + 16 ADP + 16 phosphate + 6 H(+). The key enzymatic reactions in nitrogen fixation are catalyzed by the nitrogenase complex, which has 2 components: the iron protein and the molybdenum-iron protein. The polypeptide is Nitrogenase iron protein (Desulfatibacillum aliphaticivorans).